The sequence spans 185 residues: Ribosome-recycling factor (185 aa).

Belongs to the RRF family.

The protein localises to the cytoplasm. Its function is as follows. Responsible for the release of ribosomes from messenger RNA at the termination of protein biosynthesis. May increase the efficiency of translation by recycling ribosomes from one round of translation to another. In Finegoldia magna (strain ATCC 29328 / DSM 20472 / WAL 2508) (Peptostreptococcus magnus), this protein is Ribosome-recycling factor.